Here is a 138-residue protein sequence, read N- to C-terminus: Cell division protein SepF (138 aa).

Positions 1-59 (MNNKFKDFFGFGDNDSYEERDAYEEHYDEQEEMQNSNRPTNSRDSNVVSIKAGQAGSGP) are disordered. Residues 33–48 (MQNSNRPTNSRDSNVV) are compositionally biased toward polar residues.

This sequence belongs to the SepF family. In terms of assembly, homodimer. Interacts with FtsZ.

The protein resides in the cytoplasm. Cell division protein that is part of the divisome complex and is recruited early to the Z-ring. Probably stimulates Z-ring formation, perhaps through the cross-linking of FtsZ protofilaments. Its function overlaps with FtsA. This Lactobacillus delbrueckii subsp. bulgaricus (strain ATCC 11842 / DSM 20081 / BCRC 10696 / JCM 1002 / NBRC 13953 / NCIMB 11778 / NCTC 12712 / WDCM 00102 / Lb 14) protein is Cell division protein SepF.